A 425-amino-acid polypeptide reads, in one-letter code: Serine--tRNA ligase (425 aa).

233 to 235 (TAE) lines the L-serine pocket. 264 to 266 (RAE) is an ATP binding site. E287 lines the L-serine pocket. Residue 351-354 (EISS) coordinates ATP. Residue S387 coordinates L-serine.

It belongs to the class-II aminoacyl-tRNA synthetase family. Type-1 seryl-tRNA synthetase subfamily. Homodimer. The tRNA molecule binds across the dimer.

The protein resides in the cytoplasm. It carries out the reaction tRNA(Ser) + L-serine + ATP = L-seryl-tRNA(Ser) + AMP + diphosphate + H(+). It catalyses the reaction tRNA(Sec) + L-serine + ATP = L-seryl-tRNA(Sec) + AMP + diphosphate + H(+). Its pathway is aminoacyl-tRNA biosynthesis; selenocysteinyl-tRNA(Sec) biosynthesis; L-seryl-tRNA(Sec) from L-serine and tRNA(Sec): step 1/1. Catalyzes the attachment of serine to tRNA(Ser). Is also able to aminoacylate tRNA(Sec) with serine, to form the misacylated tRNA L-seryl-tRNA(Sec), which will be further converted into selenocysteinyl-tRNA(Sec). This is Serine--tRNA ligase from Clostridium perfringens (strain 13 / Type A).